We begin with the raw amino-acid sequence, 425 residues long: MPYVDRQNRICGFLDIEENENSGKFLRRYFILDTQANCLLWYMDNPQNLAIGAGAVGSLQLTYISKVSIATPKQKPKTPFCFVINALSQRYFLQANDQKDLKDWVEALNQASKITVPKAGNLPLTTEVLKSLATPLALEKKPQVAYKTEIIGGVVVHTPINQNGGDGQEVGEPGSHAILRRSQSYIPTTGCRGPTGPPLIKSGYCVKQGNVRKSWKRRFFALDDFTICYFKCEQDREPLRTIFLKDVLKTHECLVKSGDLLMRDNLFEIITSSRTFYVQADSPEDMHSWIKEIGAAVQALKCHPREMSFSRSISLTRPGSSSLSGGPNSILCRGRAPGEERKTLCKAPSLASSWQPWTPVPQAGEKLLPTEETAEDSLFTPRLGESSTSAVLPSSRIRHRSEPQHPKEKPFVFNLDDENIRTSDV.

The PH 1 domain maps to 7–113 (QNRICGFLDI…WVEALNQASK (107 aa)). A Glycyl lysine isopeptide (Lys-Gly) (interchain with G-Cter in SUMO2) cross-link involves residue Lys141. A Phosphoserine modification is found at Ser184. In terms of domain architecture, PH 2 spans 198–298 (PLIKSGYCVK…WIKEIGAAVQ (101 aa)). Phosphoserine is present on residues Ser314 and Ser349. Positions 374 to 410 (AEDSLFTPRLGESSTSAVLPSSRIRHRSEPQHPKEKP) are disordered. Basic and acidic residues predominate over residues 400–410 (RSEPQHPKEKP).

In terms of assembly, binds MPDZ and PTPN13.

The protein localises to the cytoplasm. Its subcellular location is the cell membrane. It is found in the nucleus. In terms of biological role, binds specifically to phosphatidylinositol 3,4-diphosphate (PtdIns3,4P2), but not to other phosphoinositides. May recruit other proteins to the plasma membrane. This is Pleckstrin homology domain-containing family A member 2 (PLEKHA2) from Bos taurus (Bovine).